The following is a 367-amino-acid chain: 5-amino-6-(D-ribitylamino)uracil--L-tyrosine 4-hydroxyphenyl transferase (367 aa).

The region spanning 56–290 (VTYVRNQNIN…MFAVARLFLD (235 aa)) is the Radical SAM core domain. [4Fe-4S] cluster is bound by residues C70, C74, and C77.

This sequence belongs to the radical SAM superfamily. CofH family. Consists of two subunits, CofG and CofH. [4Fe-4S] cluster is required as a cofactor.

It carries out the reaction 5-amino-6-(D-ribitylamino)uracil + L-tyrosine + S-adenosyl-L-methionine = 5-amino-5-(4-hydroxybenzyl)-6-(D-ribitylimino)-5,6-dihydrouracil + 2-iminoacetate + 5'-deoxyadenosine + L-methionine + H(+). The protein operates within cofactor biosynthesis; coenzyme F0 biosynthesis. Catalyzes the radical-mediated synthesis of 5-amino-5-(4-hydroxybenzyl)-6-(D-ribitylimino)-5,6-dihydrouracil from 5-amino-6-(D-ribitylamino)uracil and L-tyrosine. This Methanoculleus marisnigri (strain ATCC 35101 / DSM 1498 / JR1) protein is 5-amino-6-(D-ribitylamino)uracil--L-tyrosine 4-hydroxyphenyl transferase.